Reading from the N-terminus, the 128-residue chain is Holo-[acyl-carrier-protein] synthase (128 aa).

Mg(2+) is bound by residues Asp-7 and Glu-55.

The protein belongs to the P-Pant transferase superfamily. AcpS family. The cofactor is Mg(2+).

It localises to the cytoplasm. It carries out the reaction apo-[ACP] + CoA = holo-[ACP] + adenosine 3',5'-bisphosphate + H(+). In terms of biological role, transfers the 4'-phosphopantetheine moiety from coenzyme A to a Ser of acyl-carrier-protein. This is Holo-[acyl-carrier-protein] synthase from Moorella thermoacetica (strain ATCC 39073 / JCM 9320).